A 259-amino-acid polypeptide reads, in one-letter code: Indole-3-glycerol phosphate synthase (259 aa).

The protein belongs to the TrpC family.

The enzyme catalyses 1-(2-carboxyphenylamino)-1-deoxy-D-ribulose 5-phosphate + H(+) = (1S,2R)-1-C-(indol-3-yl)glycerol 3-phosphate + CO2 + H2O. Its pathway is amino-acid biosynthesis; L-tryptophan biosynthesis; L-tryptophan from chorismate: step 4/5. This chain is Indole-3-glycerol phosphate synthase, found in Dehalococcoides mccartyi (strain ATCC BAA-2100 / JCM 16839 / KCTC 5957 / BAV1).